Reading from the N-terminus, the 413-residue chain is BSD domain-containing protein 1-A (413 aa).

One can recognise a BSD domain in the interval 146 to 198; sequence WLAYWDPEQRKAEISELLVTSPSIRALFTKMVPAAVSHSEFWQRYFYKVHQLE. Composition is skewed to basic and acidic residues over residues 208 to 219 and 255 to 271; these read KQRADQSVHSEE and HVEDKSEKTAELNRDHT. Disordered stretches follow at residues 208-228 and 255-386; these read KQRADQSVHSEEPTWEEEEED and HVED…EFDM. Over residues 274–287 the composition is skewed to low complexity; sequence TSPSESSESISPIT. The segment covering 297–322 has biased composition (polar residues); sequence QTPSKEPSPGTLTVTKENTGAGTDET. The segment covering 342–352 has biased composition (basic and acidic residues); that stretch reads QREDPPSDLRV. Positions 356–375 are enriched in polar residues; the sequence is NSDSGKSTPSNNGQKGSSTD. A compositionally biased stretch (acidic residues) spans 376-386; the sequence is ISEDWEKEFDM.

The chain is BSD domain-containing protein 1-A (bsdc1-a) from Xenopus laevis (African clawed frog).